Here is a 287-residue protein sequence, read N- to C-terminus: Phosphatidylserine decarboxylase proenzyme (287 aa).

Residues Asp-90, His-147, and Ser-253 each act as charge relay system; for autoendoproteolytic cleavage activity in the active site. The active-site Schiff-base intermediate with substrate; via pyruvic acid; for decarboxylase activity is Ser-253. Ser-253 carries the pyruvic acid (Ser); by autocatalysis modification.

The protein belongs to the phosphatidylserine decarboxylase family. PSD-B subfamily. Prokaryotic type I sub-subfamily. In terms of assembly, heterodimer of a large membrane-associated beta subunit and a small pyruvoyl-containing alpha subunit. Requires pyruvate as cofactor. Is synthesized initially as an inactive proenzyme. Formation of the active enzyme involves a self-maturation process in which the active site pyruvoyl group is generated from an internal serine residue via an autocatalytic post-translational modification. Two non-identical subunits are generated from the proenzyme in this reaction, and the pyruvate is formed at the N-terminus of the alpha chain, which is derived from the carboxyl end of the proenzyme. The autoendoproteolytic cleavage occurs by a canonical serine protease mechanism, in which the side chain hydroxyl group of the serine supplies its oxygen atom to form the C-terminus of the beta chain, while the remainder of the serine residue undergoes an oxidative deamination to produce ammonia and the pyruvoyl prosthetic group on the alpha chain. During this reaction, the Ser that is part of the protease active site of the proenzyme becomes the pyruvoyl prosthetic group, which constitutes an essential element of the active site of the mature decarboxylase.

It localises to the cell membrane. The catalysed reaction is a 1,2-diacyl-sn-glycero-3-phospho-L-serine + H(+) = a 1,2-diacyl-sn-glycero-3-phosphoethanolamine + CO2. It functions in the pathway phospholipid metabolism; phosphatidylethanolamine biosynthesis; phosphatidylethanolamine from CDP-diacylglycerol: step 2/2. Catalyzes the formation of phosphatidylethanolamine (PtdEtn) from phosphatidylserine (PtdSer). This chain is Phosphatidylserine decarboxylase proenzyme, found in Aliivibrio salmonicida (strain LFI1238) (Vibrio salmonicida (strain LFI1238)).